Reading from the N-terminus, the 353-residue chain is Photosystem II protein D1 (353 aa).

The residue at position 2 (T2) is an N-acetylthreonine. A Phosphothreonine modification is found at T2. 3 consecutive transmembrane segments (helical) span residues 29–46 (YIGW…TATS), 118–133 (HFLL…EWEL), and 142–156 (WIAV…AATA). H118 lines the chlorophyll a pocket. Residue Y126 coordinates pheophytin a. [CaMn4O5] cluster is bound by residues D170 and E189. A helical membrane pass occupies residues 197–218 (FHMLGVAGVFGGSLFSAMHGSL). Position 198 (H198) interacts with chlorophyll a. A quinone contacts are provided by residues H215 and 264 to 265 (SF). H215 provides a ligand contact to Fe cation. H272 lines the Fe cation pocket. Residues 274 to 288 (FLAAWPVAGIWFTAL) form a helical membrane-spanning segment. Residues H332, E333, D342, and A344 each contribute to the [CaMn4O5] cluster site. Residues 345 to 353 (AVESISIGG) constitute a propeptide that is removed on maturation.

The protein belongs to the reaction center PufL/M/PsbA/D family. In terms of assembly, PSII is composed of 1 copy each of membrane proteins PsbA, PsbB, PsbC, PsbD, PsbE, PsbF, PsbH, PsbI, PsbJ, PsbK, PsbL, PsbM, PsbT, PsbX, PsbY, PsbZ, Psb30/Ycf12, at least 3 peripheral proteins of the oxygen-evolving complex and a large number of cofactors. It forms dimeric complexes. Requires The D1/D2 heterodimer binds P680, chlorophylls that are the primary electron donor of PSII, and subsequent electron acceptors. It shares a non-heme iron and each subunit binds pheophytin, quinone, additional chlorophylls, carotenoids and lipids. D1 provides most of the ligands for the Mn4-Ca-O5 cluster of the oxygen-evolving complex (OEC). There is also a Cl(-1) ion associated with D1 and D2, which is required for oxygen evolution. The PSII complex binds additional chlorophylls, carotenoids and specific lipids. as cofactor. In terms of processing, tyr-161 forms a radical intermediate that is referred to as redox-active TyrZ, YZ or Y-Z. C-terminally processed by CTPA; processing is essential to allow assembly of the oxygen-evolving complex and thus photosynthetic growth.

Its subcellular location is the plastid. It localises to the chloroplast thylakoid membrane. It catalyses the reaction 2 a plastoquinone + 4 hnu + 2 H2O = 2 a plastoquinol + O2. Its function is as follows. Photosystem II (PSII) is a light-driven water:plastoquinone oxidoreductase that uses light energy to abstract electrons from H(2)O, generating O(2) and a proton gradient subsequently used for ATP formation. It consists of a core antenna complex that captures photons, and an electron transfer chain that converts photonic excitation into a charge separation. The D1/D2 (PsbA/PsbD) reaction center heterodimer binds P680, the primary electron donor of PSII as well as several subsequent electron acceptors. In Pinus koraiensis (Korean pine), this protein is Photosystem II protein D1.